We begin with the raw amino-acid sequence, 394 residues long: Phosphopentomutase (394 aa).

Mn(2+)-binding residues include Asp-14, Asp-287, His-292, Asp-328, His-329, and His-340.

Belongs to the phosphopentomutase family. Requires Mn(2+) as cofactor.

Its subcellular location is the cytoplasm. It carries out the reaction 2-deoxy-alpha-D-ribose 1-phosphate = 2-deoxy-D-ribose 5-phosphate. It catalyses the reaction alpha-D-ribose 1-phosphate = D-ribose 5-phosphate. The protein operates within carbohydrate degradation; 2-deoxy-D-ribose 1-phosphate degradation; D-glyceraldehyde 3-phosphate and acetaldehyde from 2-deoxy-alpha-D-ribose 1-phosphate: step 1/2. In terms of biological role, isomerase that catalyzes the conversion of deoxy-ribose 1-phosphate (dRib-1-P) and ribose 1-phosphate (Rib-1-P) to deoxy-ribose 5-phosphate (dRib-5-P) and ribose 5-phosphate (Rib-5-P), respectively. In Listeria welshimeri serovar 6b (strain ATCC 35897 / DSM 20650 / CCUG 15529 / CIP 8149 / NCTC 11857 / SLCC 5334 / V8), this protein is Phosphopentomutase.